The following is an 807-amino-acid chain: Tyrosine-protein kinase receptor torso (807 aa).

The signal sequence occupies residues 1-28 (MYSEGKLLKVFLIFAGFIIFSLCGEVVS). Over 29–370 (QRYPPAPGLL…RAFTPGMLRW (342 aa)) the chain is Extracellular. 4 disulfides stabilise this stretch: Cys-46-Cys-61, Cys-81-Cys-203, Cys-210-Cys-239, and Cys-259-Cys-265. N-linked (GlcNAc...) asparagine glycans are attached at residues Asn-54, Asn-171, Asn-183, and Asn-195. Residues Asn-307, Asn-323, and Asn-344 are each glycosylated (N-linked (GlcNAc...) asparagine). The chain crosses the membrane as a helical span at residues 371–391 (VWAGATAGAGCAAGGLLAATL). The Cytoplasmic portion of the chain corresponds to 392–807 (LCCGHRRATS…SPPVIQTKTA (416 aa)). Positions 439-738 (VLLHEVIGEG…PTFPELHQKL (300 aa)) constitute a Protein kinase domain. ATP contacts are provided by residues 445-453 (IGEGAFGVV) and Lys-468. The active-site Proton acceptor is the Asp-607.

This sequence belongs to the protein kinase superfamily. Tyr protein kinase family. As to quaternary structure, homodimer; disulfide-linked. Mg(2+) serves as cofactor. In terms of processing, may be auto-phosphorylated on tyrosine residues. At least one of the 3 cysteine residues Cys-381, Cys-393 or Cys-394 is involved in the formation of interchain disulfide bonds. The disulfide bond sites in the extracellular region are not involved in homodimer formation.

It localises to the cell membrane. It carries out the reaction L-tyrosyl-[protein] + ATP = O-phospho-L-tyrosyl-[protein] + ADP + H(+). In terms of biological role, probable receptor tyrosine kinase. During postembryonic development, involved in the initiation of metamorphosis probably by inducing the production of ecdysone in response to prothoracicotropic hormone (PTTH). Binding to PTTH stimulates activation of canonical MAPK signaling leading to ERK phosphorylation. The polypeptide is Tyrosine-protein kinase receptor torso (Bombyx mori (Silk moth)).